Consider the following 779-residue polypeptide: MIISRPLCSFVFAGLSFAVILPAQALVEPGNQAARAEIRRTGFGVPHIVAANERGLGYGIGYAYAQDNLCLLANEVVTVNGQRSRYFGPDKATLEQRNNMASDLLFQWLNTPQALADFWNAQPREIRQLMQGYVAGYNRSLAEQTTQGLPQPCAAEWVRPISTDDLLRLTRRLLVEGGVGQFAEALAGATPPAQQKPLQVDAQQAQALQLAAARNQRFALERGSNAVAIGRELSANGRGMLLANPHFPWGGGMRFYQMHLTIPGKLDVMGAALPGLPLINIGFNQHLAWSHTVDTSKHFTLHRLQLDPKDSTRYLLDGQSVAMGKQQVSVDVKQADGSLKSVPRIVYSSIFGPVVQWPGKLDWDSKFAFSLRDANLQNDRVLQQWYAMDKADSLKAFQDSVRKIQGIPWVNTLAVDAQGQALYMNLSVVPNVDAARLARCSDPRIGTELIVLDGSRSECNWEVSAEAAQAGIYPSSRQPQLLRTDFVQHSNDSAWMVNPAAPLQGFSPLISQDGQPLGQRARFALDRLESLKTAGKISVENLQAMVMDNEVYQAGQVLPDLLTFCASELGDDAARLAPLCAALKDWDGRADLNSGIGFVYFQKIMTSMQAVASRWRVAFDPQDPVHTPSGLAIENPSVATALRAAMLAAVDDVAKAGLPAGSKWGDIQVSSISGKQIPIHGGPAGLGVYNAMQTVAGKDGKREVVSGTSYLQVVTFDEQGPKAQGLLAFSESSNPQSAHSSDQTEAFSKKQWQALPFTEQQIKADPAYEVQVISEEPDR.

An N-terminal signal peptide occupies residues 1-25; the sequence is MIISRPLCSFVFAGLSFAVILPAQA. The propeptide at 202–223 is spacer peptide; the sequence is AQQAQALQLAAARNQRFALERG. Serine 224 functions as the Nucleophile in the catalytic mechanism. A compositionally biased stretch (polar residues) spans 731–746; sequence ESSNPQSAHSSDQTEA. Positions 731 to 750 are disordered; the sequence is ESSNPQSAHSSDQTEAFSKK.

Belongs to the peptidase S45 family. Heterodimer of an alpha subunit and a beta subunit processed from the same precursor.

The protein resides in the periplasm. It carries out the reaction an N-acyl-L-homoserine lactone + H2O = L-homoserine lactone + a carboxylate. In terms of biological role, catalyzes the deacylation of acyl-homoserine lactone (AHL or acyl-HSL), releasing homoserine lactone (HSL) and the corresponding fatty acid. Possesses a specificity for the degradation of long-chain acyl-HSLs (side chains of 11 to 14 carbons in length). The chain is Acyl-homoserine lactone acylase PvdQ (pvdQ) from Pseudomonas syringae pv. syringae (strain B728a).